The following is a 355-amino-acid chain: UDP-N-acetylglucosamine--N-acetylmuramyl-(pentapeptide) pyrophosphoryl-undecaprenol N-acetylglucosamine transferase (355 aa).

UDP-N-acetyl-alpha-D-glucosamine contacts are provided by residues 11 to 13 (TAG), R164, S194, and Q289.

Belongs to the glycosyltransferase 28 family. MurG subfamily.

Its subcellular location is the cell membrane. The catalysed reaction is di-trans,octa-cis-undecaprenyl diphospho-N-acetyl-alpha-D-muramoyl-L-alanyl-D-glutamyl-meso-2,6-diaminopimeloyl-D-alanyl-D-alanine + UDP-N-acetyl-alpha-D-glucosamine = di-trans,octa-cis-undecaprenyl diphospho-[N-acetyl-alpha-D-glucosaminyl-(1-&gt;4)]-N-acetyl-alpha-D-muramoyl-L-alanyl-D-glutamyl-meso-2,6-diaminopimeloyl-D-alanyl-D-alanine + UDP + H(+). Its pathway is cell wall biogenesis; peptidoglycan biosynthesis. Cell wall formation. Catalyzes the transfer of a GlcNAc subunit on undecaprenyl-pyrophosphoryl-MurNAc-pentapeptide (lipid intermediate I) to form undecaprenyl-pyrophosphoryl-MurNAc-(pentapeptide)GlcNAc (lipid intermediate II). The sequence is that of UDP-N-acetylglucosamine--N-acetylmuramyl-(pentapeptide) pyrophosphoryl-undecaprenol N-acetylglucosamine transferase from Lachnoclostridium phytofermentans (strain ATCC 700394 / DSM 18823 / ISDg) (Clostridium phytofermentans).